The sequence spans 470 residues: Zinc finger and BTB domain-containing protein 8A.1-A (470 aa).

In terms of domain architecture, BTB spans 24 to 92 (CDCHIIVEGQ…VYSGKLPLSG (69 aa)). The disordered stretch occupies residues 260-280 (EDEDAASHSWPESPQQESLDQ). The span at 269 to 278 (WPESPQQESL) shows a compositional bias: polar residues. 2 C2H2-type zinc fingers span residues 316 to 338 (FKCP…LRCH) and 344 to 367 (YPCE…QTIH). Over residues 439–450 (GRKENGSERAES) the composition is skewed to basic and acidic residues. Residues 439–470 (GRKENGSERAESDLAIQEVVDSEDDELKEKQD) are disordered.

It is found in the nucleus. May be involved in transcriptional regulation. In Xenopus laevis (African clawed frog), this protein is Zinc finger and BTB domain-containing protein 8A.1-A (zbtb8a.1-a).